An 849-amino-acid chain; its full sequence is Putative respiratory burst oxidase homolog protein G (849 aa).

Residues 1 to 17 show a composition bias toward basic and acidic residues; it reads MQRVSFEVKDTEAEKSS. The interval 1–53 is disordered; it reads MQRVSFEVKDTEAEKSSSEILSGSLPSTYRNPAMENVGNAVDDGSSVKNNPKL. Over 1–303 the chain is Cytoplasmic; it reads MQRVSFEVKD…RFFVLDSWQR (303 aa). Over residues 18–27 the composition is skewed to low complexity; the sequence is SEILSGSLPS. 2 EF-hand-like regions span residues 118–128 and 153–164; these read TANTDGLLLRS and SHLKGDVITETE. 2 EF-hand domains span residues 176-211 and 220-255; these read SFDS…SSSA and KADE…AETK. Residues Asp-189, Asp-191, Asp-193, Arg-195, and Glu-200 each contribute to the Ca(2+) site. At Ser-270 the chain carries Phosphoserine. Residues 304 to 324 form a helical membrane-spanning segment; sequence VWVIALWLTIMAILFAYKYIQ. Topologically, residues 325–392 are extracellular; sequence YKNRAVYEVL…LNFHKVIAVG (68 aa). Residues 342–502 enclose the Ferric oxidoreductase domain; it reads KGAAETLKLN…LFVIVYILLV (161 aa). A helical membrane pass occupies residues 393 to 409; the sequence is IAIGVAIHSVSHLACDF. The Cytoplasmic segment spans residues 410–444; the sequence is PLLIAATPAEYMPLGKFFGEEQPKRYLHFVKSTEG. The helical transmembrane segment at 445–465 threads the bilayer; it reads ITGLVMVFLMVIAFTLAMPWF. Over 466-489 the chain is Extracellular; the sequence is RRGKLEKKLPGPLKKLASFNAFWY. The helical transmembrane segment at 490 to 510 threads the bilayer; it reads THHLFVIVYILLVLHGYYIYL. The Cytoplasmic portion of the chain corresponds to 511 to 518; the sequence is NKEWYKKT. A helical transmembrane segment spans residues 519-536; sequence TWMYLAVPVALYAYERLI. Residues 537-659 are Extracellular-facing; it reads RAFRSSIRTV…PYGAPAQDYK (123 aa). The region spanning 541-657 is the FAD-binding FR-type domain; the sequence is SSIRTVKVLK…DGPYGAPAQD (117 aa). The chain crosses the membrane as a helical span at residues 660 to 680; it reads KYEVVLLIGLGIGATPMISII. Over 681–849 the chain is Cytoplasmic; the sequence is KDIINNTETK…TRFSFHKENF (169 aa).

The protein belongs to the RBOH (TC 5.B.1.3) family. In terms of assembly, monomer and homodimer.

Its subcellular location is the membrane. In terms of biological role, calcium-dependent NADPH oxidase that generates superoxide. The polypeptide is Putative respiratory burst oxidase homolog protein G (RBOHG) (Arabidopsis thaliana (Mouse-ear cress)).